The following is a 252-amino-acid chain: Phosphoglycolate phosphatase (252 aa).

The active-site Nucleophile is the aspartate 13. The Mg(2+) site is built by aspartate 13, aspartate 15, and aspartate 192.

This sequence belongs to the HAD-like hydrolase superfamily. CbbY/CbbZ/Gph/YieH family. In terms of assembly, monomer. The cofactor is Mg(2+). Requires chloride as cofactor.

It carries out the reaction 2-phosphoglycolate + H2O = glycolate + phosphate. It functions in the pathway organic acid metabolism; glycolate biosynthesis; glycolate from 2-phosphoglycolate: step 1/1. Functionally, specifically catalyzes the dephosphorylation of 2-phosphoglycolate. Is involved in the dissimilation of the intracellular 2-phosphoglycolate formed during the DNA repair of 3'-phosphoglycolate ends, a major class of DNA lesions induced by oxidative stress. This Shigella flexneri protein is Phosphoglycolate phosphatase.